Here is a 120-residue protein sequence, read N- to C-terminus: Aspartate 1-decarboxylase (120 aa).

Ser25 acts as the Schiff-base intermediate with substrate; via pyruvic acid in catalysis. A Pyruvic acid (Ser) modification is found at Ser25. Thr57 serves as a coordination point for substrate. Tyr58 (proton donor) is an active-site residue. 73-75 (GAA) serves as a coordination point for substrate.

This sequence belongs to the PanD family. In terms of assembly, heterooctamer of four alpha and four beta subunits. Requires pyruvate as cofactor. In terms of processing, is synthesized initially as an inactive proenzyme, which is activated by self-cleavage at a specific serine bond to produce a beta-subunit with a hydroxyl group at its C-terminus and an alpha-subunit with a pyruvoyl group at its N-terminus.

It localises to the cytoplasm. The enzyme catalyses L-aspartate + H(+) = beta-alanine + CO2. Its pathway is cofactor biosynthesis; (R)-pantothenate biosynthesis; beta-alanine from L-aspartate: step 1/1. Its function is as follows. Catalyzes the pyruvoyl-dependent decarboxylation of aspartate to produce beta-alanine. The sequence is that of Aspartate 1-decarboxylase from Ralstonia pickettii (strain 12J).